Here is a 404-residue protein sequence, read N- to C-terminus: Zinc finger protein zfs1 (404 aa).

Over residues 134-149 the composition is skewed to polar residues; the sequence is SYLHSGSSPHGNTSNH. 2 disordered regions span residues 134–168 and 259–322; these read SYLH…TGSG and SNAS…APNG. Over residues 150-168 the composition is skewed to low complexity; sequence PSPISSLESLPSRSSTGSG. A compositionally biased stretch (polar residues) spans 259–283; it reads SNASIRNAPSNLSKQFSPSGNSPLT. Residues 304–317 are compositionally biased toward low complexity; the sequence is GSASHPHGSGSSNG. 2 consecutive C3H1-type zinc fingers follow at residues 326 to 354 and 364 to 392; these read LYKT…HGNQ and KYKS…HDES.

As to quaternary structure, interacts with moc3.

Its subcellular location is the cytoplasm. The protein resides in the nucleus. Functionally, binds to specific AU-rich elements (ARE) in the 3'-untranslated region of target mRNAs and promotes their degradation. Binds to ARE present in the arz1 mRNA and stimulates the rate of arz1 mRNA decay. Required for coordination of septum formation with exit from mitosis. Involved in the mating response pathway. Induces sexual development and ascus formation. This is Zinc finger protein zfs1 (zfs1) from Schizosaccharomyces pombe (strain 972 / ATCC 24843) (Fission yeast).